The sequence spans 675 residues: Glycerophosphocholine phosphodiesterase GPCPD1 (675 aa).

The CBM20 domain occupies 1-115 (MTPSQVTFEI…IIIDDGQFGI (115 aa)). Residues Arg-70 and 88 to 89 (HK) each bind substrate. A phosphoserine mark is found at Ser-178 and Ser-427. In terms of domain architecture, GP-PDE spans 321 to 621 (PLDVGHRGAG…DRIYDWMPEQ (301 aa)). Tyr-611 carries the post-translational modification Phosphotyrosine.

This sequence belongs to the glycerophosphoryl diester phosphodiesterase family. As to expression, widely expressed with highest levels in skeletal muscle and heart.

The protein resides in the cytoplasm. It localises to the cytosol. It catalyses the reaction sn-glycerol 3-phosphocholine + H2O = sn-glycerol 3-phosphate + choline + H(+). May be involved in the negative regulation of skeletal muscle differentiation, independently of its glycerophosphocholine phosphodiesterase activity. This chain is Glycerophosphocholine phosphodiesterase GPCPD1 (Gpcpd1), found in Mus musculus (Mouse).